Here is a 421-residue protein sequence, read N- to C-terminus: Histidine--tRNA ligase (421 aa).

This sequence belongs to the class-II aminoacyl-tRNA synthetase family. In terms of assembly, homodimer.

The protein resides in the cytoplasm. It catalyses the reaction tRNA(His) + L-histidine + ATP = L-histidyl-tRNA(His) + AMP + diphosphate + H(+). The polypeptide is Histidine--tRNA ligase (Francisella tularensis subsp. holarctica (strain OSU18)).